Consider the following 110-residue polypeptide: QVRPFLDVYQRSACQARETLVSILQEYPDEISDIFRPSCVAVLRCSGCCTDESLKCTPVGKHTVDMQIMRVNPRTQSSKMEVMKFTEHTACECRPRRKQGEPDGPKEKPR.

A Pyrrolidone carboxylic acid modification is found at Q1. 3 disulfides stabilise this stretch: C14–C56, C45–C91, and C49–C93.

The protein belongs to the PDGF/VEGF growth factor family. Snake venom VEGF subfamily. In terms of assembly, homodimer; disulfide-linked. In terms of tissue distribution, expressed by the venom gland.

The protein localises to the secreted. Its function is as follows. Snake venom VEGFs that may contribute to venom dispersion and prey subjugation by inducing vascular permeability and hypotension. This protein potently stimulates dermal human microvascular endothelial cell (dHMVEC) proliferation in a VEGFR-2 dependent manner. This stimulatory effect is correlated with activation of the MAPK Erk1/2 signaling pathway. It also appears to be a chemoattractant for migration of these cells and stimulates their radial migration in a collagen gel. In vivo, it induces angiogenesis in a Japanese quail assay. This pro-angiogenic effect may also be related to its interaction with VEGFR-2. In addition, it may induce an increase in capillary permeability after intradermal injection, as well as a drastic hypotensive effect after intravenous injection. The hypotension is mediated by nitric oxide (NO), which is produced by VEGF-activated endothelium NO synthase. This is Snake venom vascular endothelial growth factor toxin from Daboia palaestinae (Palestine viper).